Reading from the N-terminus, the 378-residue chain is 4-hydroxy-3-methylbut-2-en-1-yl diphosphate synthase (flavodoxin) (378 aa).

Residues Cys-268, Cys-271, Cys-303, and Glu-310 each coordinate [4Fe-4S] cluster.

It belongs to the IspG family. The cofactor is [4Fe-4S] cluster.

It carries out the reaction (2E)-4-hydroxy-3-methylbut-2-enyl diphosphate + oxidized [flavodoxin] + H2O + 2 H(+) = 2-C-methyl-D-erythritol 2,4-cyclic diphosphate + reduced [flavodoxin]. Its pathway is isoprenoid biosynthesis; isopentenyl diphosphate biosynthesis via DXP pathway; isopentenyl diphosphate from 1-deoxy-D-xylulose 5-phosphate: step 5/6. Its function is as follows. Converts 2C-methyl-D-erythritol 2,4-cyclodiphosphate (ME-2,4cPP) into 1-hydroxy-2-methyl-2-(E)-butenyl 4-diphosphate. This Corynebacterium glutamicum (strain ATCC 13032 / DSM 20300 / JCM 1318 / BCRC 11384 / CCUG 27702 / LMG 3730 / NBRC 12168 / NCIMB 10025 / NRRL B-2784 / 534) protein is 4-hydroxy-3-methylbut-2-en-1-yl diphosphate synthase (flavodoxin).